A 400-amino-acid chain; its full sequence is Phosphoglycerate kinase (400 aa).

Residues 23–25 (DLN), Arg-38, 61–64 (HFGR), Arg-120, and Arg-153 contribute to the substrate site. Residues Lys-203, Glu-325, and 355 to 358 (GGDT) contribute to the ATP site.

Belongs to the phosphoglycerate kinase family. As to quaternary structure, monomer.

It is found in the cytoplasm. The catalysed reaction is (2R)-3-phosphoglycerate + ATP = (2R)-3-phospho-glyceroyl phosphate + ADP. The protein operates within carbohydrate degradation; glycolysis; pyruvate from D-glyceraldehyde 3-phosphate: step 2/5. The sequence is that of Phosphoglycerate kinase from Methylorubrum extorquens (strain CM4 / NCIMB 13688) (Methylobacterium extorquens).